Consider the following 213-residue polypeptide: Kynurenine formamidase (213 aa).

A substrate-binding site is contributed by tryptophan 18. Positions 48, 52, and 54 each coordinate Zn(2+). Histidine 58 functions as the Proton donor/acceptor in the catalytic mechanism. The Zn(2+) site is built by histidine 160 and glutamate 172.

This sequence belongs to the Cyclase 1 superfamily. KynB family. Homodimer. Zn(2+) is required as a cofactor.

The catalysed reaction is N-formyl-L-kynurenine + H2O = L-kynurenine + formate + H(+). It participates in amino-acid degradation; L-tryptophan degradation via kynurenine pathway; L-kynurenine from L-tryptophan: step 2/2. In terms of biological role, catalyzes the hydrolysis of N-formyl-L-kynurenine to L-kynurenine, the second step in the kynurenine pathway of tryptophan degradation. The polypeptide is Kynurenine formamidase (Burkholderia vietnamiensis (strain G4 / LMG 22486) (Burkholderia cepacia (strain R1808))).